The sequence spans 61 residues: Photosystem II reaction center protein K (61 aa).

A propeptide spanning residues methionine 1–alanine 24 is cleaved from the precursor. A helical membrane pass occupies residues methionine 40–phenylalanine 60.

This sequence belongs to the PsbK family. In terms of assembly, PSII is composed of 1 copy each of membrane proteins PsbA, PsbB, PsbC, PsbD, PsbE, PsbF, PsbH, PsbI, PsbJ, PsbK, PsbL, PsbM, PsbT, PsbX, PsbY, PsbZ, Psb30/Ycf12, at least 3 peripheral proteins of the oxygen-evolving complex and a large number of cofactors. It forms dimeric complexes.

Its subcellular location is the plastid. The protein resides in the chloroplast thylakoid membrane. Its function is as follows. One of the components of the core complex of photosystem II (PSII). PSII is a light-driven water:plastoquinone oxidoreductase that uses light energy to abstract electrons from H(2)O, generating O(2) and a proton gradient subsequently used for ATP formation. It consists of a core antenna complex that captures photons, and an electron transfer chain that converts photonic excitation into a charge separation. The sequence is that of Photosystem II reaction center protein K from Citrus sinensis (Sweet orange).